We begin with the raw amino-acid sequence, 161 residues long: Suppressor of kinetochore protein 1 (161 aa).

The interval 102–161 is interaction with the F-box domain of F-box proteins; sequence VLASNYLDIKPLLDTGCKTVANMIRGKSPEDIRKTFNIPNDFTPEEEEQIRKENEWAEDR.

It belongs to the SKP1 family. In terms of assembly, essential component of the E3 ubiquitin ligase Skp1-Cullin-1-F-box (SCF) complex. Interacts with cul1, fbh1, mcs2, pip1, pof1, pof2, pof3, pof4, pof5, pof6, pof7, pof8, pof9, pof10, pof11, pof12, pof13, pof14, pop1, pop2 and tfb3. Forms a complex with pof6 and sip1. Component of the RAVE complex composed of rav1, rav2 and skp1.

It is found in the cytoplasm. It localises to the nucleus. Functionally, required for cig2 degradation in the G2 and M phases of the cell cycle. Together with pof6, essential for septum processing and cell separation. Involved in mitotic progression, essential for the execution of anaphase B; required for coordinated structural alterations of mitotic spindles and segregation of nuclear membrane structures at anaphase. Involved in the DNA damage checkpoint pathway and maintenance of genome integrity. Component of the RAVE complex which is required for stable assembly of the vacuolar ATPase complex V-ATPase. The protein is Suppressor of kinetochore protein 1 of Schizosaccharomyces pombe (strain 972 / ATCC 24843) (Fission yeast).